The sequence spans 767 residues: Receptor-type tyrosine-protein phosphatase-like ida-1 (767 aa).

Positions 1–19 (MRFFHSIIVLLFSISTGSA) are cleaved as a signal peptide. The Lumenal segment spans residues 20 to 398 (FLLYGCNLSE…SLPVESSERD (379 aa)). 2 N-linked (GlcNAc...) asparagine glycosylation sites follow: Asn-26 and Asn-146. Residues 399-419 (WLLMPVLFVCAFTVTALGLVA) form a helical membrane-spanning segment. At 420–767 (AVQIARSRRH…NHLLKSIATK (348 aa)) the chain is on the cytoplasmic side. The Tyrosine-protein phosphatase domain maps to 527–756 (SQNRTILPFD…KLVYGCVAQE (230 aa)).

It belongs to the protein-tyrosine phosphatase family. Receptor class 8 subfamily. Proteolytically cleaved probably at a dibasic consensus sequence by egl-3. As to expression, in hermaphrodites specifically expressed in neurons and in particular in the head nerve ring (ADE, ALA, ASI, ASK, AUA, ASG, AVH and AVJ neurons), in the ventral nerve cord, pre-anal ganglia (PVP neuron), in the tail (PHA, PHB and PHC neurons) and in vulval motor neurons VC and HSN and the vulval uv1 cells. In males, also expressed in neurons anterior to the nerve ring and male-specific neurons in the tail.

It localises to the cytoplasmic vesicle membrane. Its subcellular location is the perikaryon. The protein resides in the cell projection. It is found in the axon. The protein localises to the dendrite. Its function is as follows. Regulates dense-core vesicle (DCV) trafficking and/or secretion. Probably by controlling DCV trafficking, plays a role in the AVG neuron-mediated formation of the right axon tract of the ventral nerve cord. Involved in locomotion by regulating acetylcholine release. Probably by controlling the secretion of FLP neuropeptides, regulates the turning step of male mating behavior. Plays a role in preventing dauer formation. The polypeptide is Receptor-type tyrosine-protein phosphatase-like ida-1 (Caenorhabditis elegans).